Reading from the N-terminus, the 75-residue chain is Acyl carrier protein (75 aa).

A Carrier domain is found at 1–74 (MLDKVKEIIV…DVINYIEANK (74 aa)). Residue Ser-34 is modified to O-(pantetheine 4'-phosphoryl)serine.

The protein belongs to the acyl carrier protein (ACP) family. Post-translationally, 4'-phosphopantetheine is transferred from CoA to a specific serine of apo-ACP by AcpS. This modification is essential for activity because fatty acids are bound in thioester linkage to the sulfhydryl of the prosthetic group.

The protein localises to the cytoplasm. It functions in the pathway lipid metabolism; fatty acid biosynthesis. Carrier of the growing fatty acid chain in fatty acid biosynthesis. The polypeptide is Acyl carrier protein (Fusobacterium nucleatum subsp. nucleatum (strain ATCC 25586 / DSM 15643 / BCRC 10681 / CIP 101130 / JCM 8532 / KCTC 2640 / LMG 13131 / VPI 4355)).